Consider the following 217-residue polypeptide: Phosphoenolpyruvate guanylyltransferase (217 aa).

Thr150, Gly165, and Ser168 together coordinate phosphoenolpyruvate.

The protein belongs to the CofC family.

It carries out the reaction phosphoenolpyruvate + GTP + H(+) = enolpyruvoyl-2-diphospho-5'-guanosine + diphosphate. It participates in cofactor biosynthesis; coenzyme F420 biosynthesis. Its function is as follows. Guanylyltransferase that catalyzes the activation of phosphoenolpyruvate (PEP) as enolpyruvoyl-2-diphospho-5'-guanosine, via the condensation of PEP with GTP. It is involved in the biosynthesis of coenzyme F420, a hydride carrier cofactor. The sequence is that of Phosphoenolpyruvate guanylyltransferase from Mycobacterium marinum (strain ATCC BAA-535 / M).